The following is a 78-amino-acid chain: Acyl carrier protein (78 aa).

The Carrier domain occupies Ser2–Lys77. Residue Ser37 is modified to O-(pantetheine 4'-phosphoryl)serine.

The protein belongs to the acyl carrier protein (ACP) family. Post-translationally, 4'-phosphopantetheine is transferred from CoA to a specific serine of apo-ACP by AcpS. This modification is essential for activity because fatty acids are bound in thioester linkage to the sulfhydryl of the prosthetic group.

It localises to the cytoplasm. It participates in lipid metabolism; fatty acid biosynthesis. Carrier of the growing fatty acid chain in fatty acid biosynthesis. This is Acyl carrier protein from Wigglesworthia glossinidia brevipalpis.